The primary structure comprises 175 residues: Thioredoxin M3, chloroplastic (175 aa).

The transit peptide at 1–59 (MAATATACPAPPPPRSLYRGVALAAPGRRRAGYGASSSAARRWPGCRRRWAAHRIRTVS) directs the protein to the chloroplast. One can recognise a Thioredoxin domain in the interval 61 to 171 (AYSPRGAKTI…YVRAIEKSIS (111 aa)). Catalysis depends on nucleophile residues cysteine 95 and cysteine 98. Cysteine 95 and cysteine 98 form a disulfide bridge.

This sequence belongs to the thioredoxin family. Plant M-type subfamily.

It is found in the plastid. The protein localises to the chloroplast. Functionally, probable thiol-disulfide oxidoreductase that may be involved in the redox regulation of chloroplastic enzymes. The chain is Thioredoxin M3, chloroplastic from Oryza sativa subsp. japonica (Rice).